Reading from the N-terminus, the 351-residue chain is Ribosomal RNA small subunit methyltransferase H (351 aa).

S-adenosyl-L-methionine contacts are provided by residues 48–50 (GGY), Asp-67, Phe-94, Asp-115, and Gln-122. Positions 274–351 (AAQASRHVPG…PAPQGRGPRR (78 aa)) are disordered.

It belongs to the methyltransferase superfamily. RsmH family.

The protein localises to the cytoplasm. It carries out the reaction cytidine(1402) in 16S rRNA + S-adenosyl-L-methionine = N(4)-methylcytidine(1402) in 16S rRNA + S-adenosyl-L-homocysteine + H(+). In terms of biological role, specifically methylates the N4 position of cytidine in position 1402 (C1402) of 16S rRNA. This is Ribosomal RNA small subunit methyltransferase H from Methylorubrum extorquens (strain ATCC 14718 / DSM 1338 / JCM 2805 / NCIMB 9133 / AM1) (Methylobacterium extorquens).